The primary structure comprises 680 residues: Probable inactive DNA (cytosine-5)-methyltransferase DRM3 (680 aa).

Residues 1-24 (MVKVEDDVEGSGINASVGDLRDAA) are disordered. A UBA 1 domain is found at 45 to 86 (SSSSHVRSQFIGMGFSPMLVDRVLQKHGDRDSDTILEALLSQ). Positions 91–113 (KSGSESGSLGDLFDSDNEENSSH) are disordered. One can recognise a UBA 2 domain in the interval 194–235 (SLFGVMDKTLHLLQMGFTEEEVSSVIDKAGPEATVLELADTI). The region spanning 336–663 (IRRNVRSDVA…QRVKHIMGRL (328 aa)) is the SAM-dependent MTase DRM-type domain.

Belongs to the class I-like SAM-binding methyltransferase superfamily. DRM-methyltransferase family.

The protein resides in the nucleus. Involved in de novo DNA methylation. Involved in RNA-directed DNA methylation (RdDM). This Oryza sativa subsp. japonica (Rice) protein is Probable inactive DNA (cytosine-5)-methyltransferase DRM3.